A 248-amino-acid polypeptide reads, in one-letter code: Homeobox-leucine zipper protein HOX15 (248 aa).

Residues 1–44 are disordered; it reads MAQDDEDVGLALGLSLGSGGHRRQRESRDEAPSSAAASLLTLRL. Over residues 32-44 the composition is skewed to low complexity; sequence PSSAAASLLTLRL. Positions 91–150 form a DNA-binding region, homeobox; that stretch reads NSRKKLRLSKEQSALLEDRFKEHSTLNPKQKVALAKQLNLRPRQVEVWFQNRRARTKLKQ. A leucine-zipper region spans residues 149–193; sequence KQTEVDCELLKRCCETLTEENRRLHRELQQLRALTHSTAAGFFMA. The disordered stretch occupies residues 223–248; that stretch reads PTAAADRTNKPTAPHLFSPFAKSAAC.

It belongs to the HD-ZIP homeobox family. Class II subfamily. In terms of tissue distribution, expressed in seedlings, stems, leaf blades and panicles.

It is found in the nucleus. Functionally, probable transcription factor. The polypeptide is Homeobox-leucine zipper protein HOX15 (HOX15) (Oryza sativa subsp. indica (Rice)).